The sequence spans 249 residues: Ubiquinone/menaquinone biosynthesis C-methyltransferase UbiE (249 aa).

S-adenosyl-L-methionine contacts are provided by residues T72, D93, and 121–122; that span reads DA.

The protein belongs to the class I-like SAM-binding methyltransferase superfamily. MenG/UbiE family.

The catalysed reaction is a 2-demethylmenaquinol + S-adenosyl-L-methionine = a menaquinol + S-adenosyl-L-homocysteine + H(+). It catalyses the reaction a 2-methoxy-6-(all-trans-polyprenyl)benzene-1,4-diol + S-adenosyl-L-methionine = a 5-methoxy-2-methyl-3-(all-trans-polyprenyl)benzene-1,4-diol + S-adenosyl-L-homocysteine + H(+). The protein operates within quinol/quinone metabolism; menaquinone biosynthesis; menaquinol from 1,4-dihydroxy-2-naphthoate: step 2/2. It participates in cofactor biosynthesis; ubiquinone biosynthesis. In terms of biological role, methyltransferase required for the conversion of demethylmenaquinol (DMKH2) to menaquinol (MKH2) and the conversion of 2-polyprenyl-6-methoxy-1,4-benzoquinol (DDMQH2) to 2-polyprenyl-3-methyl-6-methoxy-1,4-benzoquinol (DMQH2). The chain is Ubiquinone/menaquinone biosynthesis C-methyltransferase UbiE from Cellvibrio japonicus (strain Ueda107) (Pseudomonas fluorescens subsp. cellulosa).